Consider the following 105-residue polypeptide: MENIMDEKGQMILLFAFVVVIVVLTLSYVYAQNIIAGVESSRAMLAFPKEEIRNLEEIQKNFGGDSEVNSQIQTLCAKNGWVCYVGVDKVEFKNVEVDYCAGSDC.

A helical transmembrane segment spans residues 13–35 (LLFAFVVVIVVLTLSYVYAQNII).

It is found in the membrane. This is an uncharacterized protein from Archaeoglobus fulgidus (strain ATCC 49558 / DSM 4304 / JCM 9628 / NBRC 100126 / VC-16).